We begin with the raw amino-acid sequence, 914 residues long: High affinity cAMP-specific and IBMX-insensitive 3',5'-cyclic phosphodiesterase 8 (914 aa).

Disordered regions lie at residues 1-27 and 113-138; these read MGCSPSTLPPAPSAGQTGERGSLPLDA and RRATGSTGTSGTSSSGGNSRPGHRKS. The segment covering 116 to 129 has biased composition (low complexity); the sequence is TGSTGTSGTSSSGG. One can recognise a PAS domain in the interval 312–359; sequence TQQALYTALHRLKEVVLITDDLLRIQYANRATERLLNMRLDEIISKQL. Positions 558 to 893 constitute a PDEase domain; the sequence is TAAIVPAKMK…SQWKKYDEQG (336 aa). The active-site Proton donor is histidine 640. Histidine 644, histidine 682, aspartate 683, and aspartate 799 together coordinate a divalent metal cation.

This sequence belongs to the cyclic nucleotide phosphodiesterase family. PDE8 subfamily. It depends on a divalent metal cation as a cofactor. In terms of tissue distribution, expressed in Malpighian tubules and head.

The catalysed reaction is 3',5'-cyclic AMP + H2O = AMP + H(+). Its pathway is purine metabolism; 3',5'-cyclic AMP degradation; AMP from 3',5'-cyclic AMP: step 1/1. Functionally, hydrolyzes the second messenger cAMP, which is a key regulator of many important physiological processes. Involved in the positive regulation of MAP kinase signaling and in inhibiting oxidative stress-induced cell death. In Drosophila melanogaster (Fruit fly), this protein is High affinity cAMP-specific and IBMX-insensitive 3',5'-cyclic phosphodiesterase 8.